The sequence spans 125 residues: Small ribosomal subunit protein uS12c (125 aa).

This sequence belongs to the universal ribosomal protein uS12 family. Part of the 30S ribosomal subunit.

It is found in the plastid. Its subcellular location is the chloroplast. With S4 and S5 plays an important role in translational accuracy. Located at the interface of the 30S and 50S subunits. In Nephroselmis olivacea (Green alga), this protein is Small ribosomal subunit protein uS12c (rps12).